The following is a 232-amino-acid chain: Enolase-phosphatase E1 (232 aa).

The protein belongs to the HAD-like hydrolase superfamily. MasA/MtnC family. Monomer. Mg(2+) serves as cofactor.

It carries out the reaction 5-methylsulfanyl-2,3-dioxopentyl phosphate + H2O = 1,2-dihydroxy-5-(methylsulfanyl)pent-1-en-3-one + phosphate. Its pathway is amino-acid biosynthesis; L-methionine biosynthesis via salvage pathway; L-methionine from S-methyl-5-thio-alpha-D-ribose 1-phosphate: step 3/6. It participates in amino-acid biosynthesis; L-methionine biosynthesis via salvage pathway; L-methionine from S-methyl-5-thio-alpha-D-ribose 1-phosphate: step 4/6. Its function is as follows. Bifunctional enzyme that catalyzes the enolization of 2,3-diketo-5-methylthiopentyl-1-phosphate (DK-MTP-1-P) into the intermediate 2-hydroxy-3-keto-5-methylthiopentenyl-1-phosphate (HK-MTPenyl-1-P), which is then dephosphorylated to form the acireductone 1,2-dihydroxy-3-keto-5-methylthiopentene (DHK-MTPene). The sequence is that of Enolase-phosphatase E1 from Xanthomonas euvesicatoria pv. vesicatoria (strain 85-10) (Xanthomonas campestris pv. vesicatoria).